Consider the following 230-residue polypeptide: Ribonuclease 3 (230 aa).

In terms of domain architecture, RNase III spans 10–133; that stretch reads DPRLQSRIGY…IIGAIYVDSN (124 aa). Residue glutamate 46 participates in Mg(2+) binding. The active site involves aspartate 50. Residues aspartate 119 and glutamate 122 each coordinate Mg(2+). The active site involves glutamate 122. In terms of domain architecture, DRBM spans 161 to 230; it reads DPKSRLQEYL…AAEILKLLEQ (70 aa).

Belongs to the ribonuclease III family. In terms of assembly, homodimer. Mg(2+) is required as a cofactor.

Its subcellular location is the cytoplasm. The catalysed reaction is Endonucleolytic cleavage to 5'-phosphomonoester.. In terms of biological role, digests double-stranded RNA. Involved in the processing of primary rRNA transcript to yield the immediate precursors to the large and small rRNAs (23S and 16S). Processes some mRNAs, and tRNAs when they are encoded in the rRNA operon. Processes pre-crRNA and tracrRNA of type II CRISPR loci if present in the organism. This Acinetobacter baylyi (strain ATCC 33305 / BD413 / ADP1) protein is Ribonuclease 3.